Reading from the N-terminus, the 206-residue chain is Large ribosomal subunit protein uL4 (206 aa).

The disordered stretch occupies residues 47–94; that stretch reads NRAQKDRSEINKSTKKPFRQKGTGRARAGRASSPLWRGGGKVFPNSPD. Residues 49 to 58 are compositionally biased toward basic and acidic residues; sequence AQKDRSEINK. The segment covering 59 to 74 has biased composition (basic residues); that stretch reads STKKPFRQKGTGRARA.

Belongs to the universal ribosomal protein uL4 family. As to quaternary structure, part of the 50S ribosomal subunit.

Its function is as follows. One of the primary rRNA binding proteins, this protein initially binds near the 5'-end of the 23S rRNA. It is important during the early stages of 50S assembly. It makes multiple contacts with different domains of the 23S rRNA in the assembled 50S subunit and ribosome. In terms of biological role, forms part of the polypeptide exit tunnel. This is Large ribosomal subunit protein uL4 from Laribacter hongkongensis (strain HLHK9).